Consider the following 362-residue polypeptide: E3 ubiquitin-protein ligase TM129 (362 aa).

Residues Met-1–Val-6 are Lumenal-facing. A helical transmembrane segment spans residues Thr-7–His-27. Topologically, residues Ser-28 to Ser-56 are cytoplasmic. Residues Ser-57–Ala-77 traverse the membrane as a helical segment. Topologically, residues Ala-78–Lys-94 are lumenal. Residues Val-95 to Ser-115 traverse the membrane as a helical segment. Over Gln-116 to Arg-362 the chain is Cytoplasmic. The RING-type; degenerate zinc finger occupies Cys-285–Arg-350.

Belongs to the TMEM129 family. In terms of assembly, integral component of ER-resident dislocation complexes.

It is found in the endoplasmic reticulum membrane. The catalysed reaction is S-ubiquitinyl-[E2 ubiquitin-conjugating enzyme]-L-cysteine + [acceptor protein]-L-lysine = [E2 ubiquitin-conjugating enzyme]-L-cysteine + N(6)-ubiquitinyl-[acceptor protein]-L-lysine.. It participates in protein modification; protein ubiquitination. In terms of biological role, E3 ubiquitin-protein ligase involved in ER-associated protein degradation, preferentially associates with the E2 enzyme UBE2J2. The sequence is that of E3 ubiquitin-protein ligase TM129 (tmem129) from Xenopus laevis (African clawed frog).